Consider the following 137-residue polypeptide: S-adenosylmethionine decarboxylase proenzyme (137 aa).

S63 functions as the Schiff-base intermediate with substrate; via pyruvic acid in the catalytic mechanism. S63 is modified (pyruvic acid (Ser); by autocatalysis). H68 (proton acceptor; for processing activity) is an active-site residue. C83 (proton donor; for catalytic activity) is an active-site residue.

This sequence belongs to the prokaryotic AdoMetDC family. Type 1 subfamily. Heterotetramer of two alpha and two beta chains arranged as a dimer of alpha/beta heterodimers. Requires pyruvate as cofactor. In terms of processing, is synthesized initially as an inactive proenzyme. Formation of the active enzyme involves a self-maturation process in which the active site pyruvoyl group is generated from an internal serine residue via an autocatalytic post-translational modification. Two non-identical subunits are generated from the proenzyme in this reaction, and the pyruvate is formed at the N-terminus of the alpha chain, which is derived from the carboxyl end of the proenzyme. The post-translation cleavage follows an unusual pathway, termed non-hydrolytic serinolysis, in which the side chain hydroxyl group of the serine supplies its oxygen atom to form the C-terminus of the beta chain, while the remainder of the serine residue undergoes an oxidative deamination to produce ammonia and the pyruvoyl group blocking the N-terminus of the alpha chain.

It carries out the reaction S-adenosyl-L-methionine + H(+) = S-adenosyl 3-(methylsulfanyl)propylamine + CO2. It participates in amine and polyamine biosynthesis; S-adenosylmethioninamine biosynthesis; S-adenosylmethioninamine from S-adenosyl-L-methionine: step 1/1. Catalyzes the decarboxylation of S-adenosylmethionine to S-adenosylmethioninamine (dcAdoMet), the propylamine donor required for the synthesis of the polyamines spermine and spermidine from the diamine putrescine. This chain is S-adenosylmethionine decarboxylase proenzyme, found in Fervidobacterium nodosum (strain ATCC 35602 / DSM 5306 / Rt17-B1).